The chain runs to 519 residues: Membrane protein insertase YidC (519 aa).

6 helical membrane passes run 6–26 (ILFV…FAQP), 298–318 (VDFG…VFFY), 324–344 (YGWA…PLTL), 390–410 (LGGC…FTML), 434–454 (FMQF…IGMF), and 471–491 (IMYI…SGLV).

It belongs to the OXA1/ALB3/YidC family. Type 1 subfamily. In terms of assembly, interacts with the Sec translocase complex via SecD. Specifically interacts with transmembrane segments of nascent integral membrane proteins during membrane integration.

The protein resides in the cell inner membrane. Functionally, required for the insertion and/or proper folding and/or complex formation of integral membrane proteins into the membrane. Involved in integration of membrane proteins that insert both dependently and independently of the Sec translocase complex, as well as at least some lipoproteins. Aids folding of multispanning membrane proteins. The polypeptide is Membrane protein insertase YidC (Endomicrobium trichonymphae).